Here is a 166-residue protein sequence, read N- to C-terminus: MKVYVIDYHKDDPKKCTGRKLVKLKLAELTRVGRGIILNPFSERTLSINDKDILIKSGITIIDTSWNNTSQNEFKNVRGEHRRLPILFAGNPIHYGIAYKLSSLEALMATLYILDEMKEAIKFSNVVKWGHTFIELNKELLEAYRNKDEEEIKKIEKEIIEKILRK.

S-adenosyl-L-methionine-binding residues include T17, I62, L84, Y99, and S103.

This sequence belongs to the TDD superfamily. TSR3 family.

It is found in the cytoplasm. It carries out the reaction an N(1)-methylpseudouridine in rRNA + S-adenosyl-L-methionine = N(1)-methyl-N(3)-[(3S)-3-amino-3-carboxypropyl]pseudouridine in rRNA + S-methyl-5'-thioadenosine + H(+). Aminocarboxypropyltransferase that catalyzes the aminocarboxypropyl transfer on pseudouridine corresponding to position 914 in M.jannaschii 16S rRNA. It constitutes the last step in biosynthesis of the hypermodified N1-methyl-N3-(3-amino-3-carboxypropyl) pseudouridine (m1acp3-Psi). In Saccharolobus islandicus (strain M.16.27) (Sulfolobus islandicus), this protein is 16S rRNA aminocarboxypropyltransferase.